Here is a 120-residue protein sequence, read N- to C-terminus: uncharacterized protein (120 aa).

To the N-terminal region of phage HK97/HK620 Gp37/hpaH.

This is an uncharacterized protein from Escherichia coli (strain K12).